Reading from the N-terminus, the 734-residue chain is Photosystem I P700 chlorophyll a apoprotein A2 (734 aa).

Transmembrane regions (helical) follow at residues 46–69, 135–158, 175–199, 273–291, 330–353, 369–395, 417–439, and 517–535; these read IFAS…FHVA, LYGG…LHLQ, LNHH…HVAI, MAHH…GHMY, LHFQ…QHMY, AALY…IFFI, AIIS…LYVH, and FLVH…LILV. Cys-559 and Cys-568 together coordinate [4Fe-4S] cluster. 2 helical membrane-spanning segments follow: residues 575–596 and 643–665; these read AFYL…YWHW and LSVW…MFLI. Chlorophyll a is bound by residues His-654, Met-662, and Tyr-670. Residue Trp-671 participates in phylloquinone binding. A helical membrane pass occupies residues 707-727; that stretch reads LVGLAHFSVGYIFTYAAFLIA.

It belongs to the PsaA/PsaB family. As to quaternary structure, the PsaA/B heterodimer binds the P700 chlorophyll special pair and subsequent electron acceptors. PSI consists of a core antenna complex that captures photons, and an electron transfer chain that converts photonic excitation into a charge separation. The eukaryotic PSI reaction center is composed of at least 11 subunits. The cofactor is P700 is a chlorophyll a/chlorophyll a' dimer, A0 is one or more chlorophyll a, A1 is one or both phylloquinones and FX is a shared 4Fe-4S iron-sulfur center..

The protein resides in the plastid. Its subcellular location is the chloroplast thylakoid membrane. The enzyme catalyses reduced [plastocyanin] + hnu + oxidized [2Fe-2S]-[ferredoxin] = oxidized [plastocyanin] + reduced [2Fe-2S]-[ferredoxin]. PsaA and PsaB bind P700, the primary electron donor of photosystem I (PSI), as well as the electron acceptors A0, A1 and FX. PSI is a plastocyanin-ferredoxin oxidoreductase, converting photonic excitation into a charge separation, which transfers an electron from the donor P700 chlorophyll pair to the spectroscopically characterized acceptors A0, A1, FX, FA and FB in turn. Oxidized P700 is reduced on the lumenal side of the thylakoid membrane by plastocyanin. The sequence is that of Photosystem I P700 chlorophyll a apoprotein A2 from Physcomitrium patens (Spreading-leaved earth moss).